The following is a 790-amino-acid chain: Probable phosphoketolase (790 aa).

The protein belongs to the XFP family. Requires thiamine diphosphate as cofactor.

The sequence is that of Probable phosphoketolase from Nitrosomonas europaea (strain ATCC 19718 / CIP 103999 / KCTC 2705 / NBRC 14298).